A 651-amino-acid polypeptide reads, in one-letter code: DNA mismatch repair protein MutL (651 aa).

The protein belongs to the DNA mismatch repair MutL/HexB family.

This protein is involved in the repair of mismatches in DNA. It is required for dam-dependent methyl-directed DNA mismatch repair. May act as a 'molecular matchmaker', a protein that promotes the formation of a stable complex between two or more DNA-binding proteins in an ATP-dependent manner without itself being part of a final effector complex. In Streptococcus mutans serotype c (strain ATCC 700610 / UA159), this protein is DNA mismatch repair protein MutL.